We begin with the raw amino-acid sequence, 64 residues long: Large ribosomal subunit protein bL35 (64 aa).

The protein belongs to the bacterial ribosomal protein bL35 family.

This is Large ribosomal subunit protein bL35 from Micrococcus luteus (strain ATCC 4698 / DSM 20030 / JCM 1464 / CCM 169 / CCUG 5858 / IAM 1056 / NBRC 3333 / NCIMB 9278 / NCTC 2665 / VKM Ac-2230) (Micrococcus lysodeikticus).